Reading from the N-terminus, the 570-residue chain is Proline--tRNA ligase (570 aa).

Belongs to the class-II aminoacyl-tRNA synthetase family. ProS type 1 subfamily. As to quaternary structure, homodimer.

It localises to the cytoplasm. It catalyses the reaction tRNA(Pro) + L-proline + ATP = L-prolyl-tRNA(Pro) + AMP + diphosphate. In terms of biological role, catalyzes the attachment of proline to tRNA(Pro) in a two-step reaction: proline is first activated by ATP to form Pro-AMP and then transferred to the acceptor end of tRNA(Pro). As ProRS can inadvertently accommodate and process non-cognate amino acids such as alanine and cysteine, to avoid such errors it has two additional distinct editing activities against alanine. One activity is designated as 'pretransfer' editing and involves the tRNA(Pro)-independent hydrolysis of activated Ala-AMP. The other activity is designated 'posttransfer' editing and involves deacylation of mischarged Ala-tRNA(Pro). The misacylated Cys-tRNA(Pro) is not edited by ProRS. The chain is Proline--tRNA ligase from Shewanella pealeana (strain ATCC 700345 / ANG-SQ1).